The sequence spans 110 residues: Integration host factor subunit alpha (110 aa).

The protein belongs to the bacterial histone-like protein family. As to quaternary structure, heterodimer of an alpha and a beta chain.

This protein is one of the two subunits of integration host factor, a specific DNA-binding protein that functions in genetic recombination as well as in transcriptional and translational control. The sequence is that of Integration host factor subunit alpha from Methylococcus capsulatus (strain ATCC 33009 / NCIMB 11132 / Bath).